The sequence spans 208 residues: FMN-dependent NADH:quinone oxidoreductase 1 (208 aa).

17 to 19 lines the FMN pocket; it reads SVS.

It belongs to the azoreductase type 1 family. As to quaternary structure, homodimer. The cofactor is FMN.

The enzyme catalyses 2 a quinone + NADH + H(+) = 2 a 1,4-benzosemiquinone + NAD(+). The catalysed reaction is N,N-dimethyl-1,4-phenylenediamine + anthranilate + 2 NAD(+) = 2-(4-dimethylaminophenyl)diazenylbenzoate + 2 NADH + 2 H(+). In terms of biological role, quinone reductase that provides resistance to thiol-specific stress caused by electrophilic quinones. Also exhibits azoreductase activity. Catalyzes the reductive cleavage of the azo bond in aromatic azo compounds to the corresponding amines. The polypeptide is FMN-dependent NADH:quinone oxidoreductase 1 (Listeria monocytogenes serotype 4b (strain F2365)).